The following is a 483-amino-acid chain: Regulatory protein ViaA (483 aa).

It belongs to the ViaA family. Homodimer. Interacts with RavA.

The protein localises to the cytoplasm. Functionally, component of the RavA-ViaA chaperone complex, which may act on the membrane to optimize the function of some of the respiratory chains. ViaA stimulates the ATPase activity of RavA. This is Regulatory protein ViaA from Escherichia coli O81 (strain ED1a).